The following is a 110-amino-acid chain: Large ribosomal subunit protein uL22 (110 aa).

It belongs to the universal ribosomal protein uL22 family. As to quaternary structure, part of the 50S ribosomal subunit.

Functionally, this protein binds specifically to 23S rRNA; its binding is stimulated by other ribosomal proteins, e.g. L4, L17, and L20. It is important during the early stages of 50S assembly. It makes multiple contacts with different domains of the 23S rRNA in the assembled 50S subunit and ribosome. Its function is as follows. The globular domain of the protein is located near the polypeptide exit tunnel on the outside of the subunit, while an extended beta-hairpin is found that lines the wall of the exit tunnel in the center of the 70S ribosome. This chain is Large ribosomal subunit protein uL22, found in Mycoplasmopsis pulmonis (strain UAB CTIP) (Mycoplasma pulmonis).